The chain runs to 507 residues: Maturase K (507 aa).

It belongs to the intron maturase 2 family. MatK subfamily.

The protein localises to the plastid. It is found in the chloroplast. In terms of biological role, usually encoded in the trnK tRNA gene intron. Probably assists in splicing its own and other chloroplast group II introns. The chain is Maturase K from Lens ervoides (Beaded lentil).